Reading from the N-terminus, the 119-residue chain is Large ribosomal subunit protein uL18 (119 aa).

This sequence belongs to the universal ribosomal protein uL18 family. Part of the 50S ribosomal subunit; part of the 5S rRNA/L5/L18/L25 subcomplex. Contacts the 5S and 23S rRNAs.

Functionally, this is one of the proteins that bind and probably mediate the attachment of the 5S RNA into the large ribosomal subunit, where it forms part of the central protuberance. The chain is Large ribosomal subunit protein uL18 from Tropheryma whipplei (strain TW08/27) (Whipple's bacillus).